Here is a 444-residue protein sequence, read N- to C-terminus: Chitinase-like protein Idgf4 (444 aa).

The first 22 residues, 1-22 (MKLLLILLGALLAVLTIKRTSA), serve as a signal peptide directing secretion. In terms of domain architecture, GH18 spans 27-444 (NHLICYYDGT…ILRAIKFKFQ (418 aa)). C31 and C58 form a disulfide bridge. N-linked (GlcNAc...) asparagine glycosylation is present at N226. An intrachain disulfide couples C345 to C428.

Belongs to the glycosyl hydrolase 18 family. IDGF subfamily. Glycosylated.

The protein localises to the secreted. Cooperates with insulin-like peptides to stimulate the proliferation, polarization and motility of imaginal disk cells. May act by stabilizing the binding of insulin-like peptides to its receptor through a simultaneous interaction with both molecules to form a multiprotein signaling complex. This Glossina morsitans morsitans (Savannah tsetse fly) protein is Chitinase-like protein Idgf4 (Idgf4).